The chain runs to 265 residues: Tryptophan synthase alpha chain (265 aa).

Residues glutamate 41 and aspartate 52 each act as proton acceptor in the active site.

It belongs to the TrpA family. Tetramer of two alpha and two beta chains.

It catalyses the reaction (1S,2R)-1-C-(indol-3-yl)glycerol 3-phosphate + L-serine = D-glyceraldehyde 3-phosphate + L-tryptophan + H2O. The protein operates within amino-acid biosynthesis; L-tryptophan biosynthesis; L-tryptophan from chorismate: step 5/5. The alpha subunit is responsible for the aldol cleavage of indoleglycerol phosphate to indole and glyceraldehyde 3-phosphate. The protein is Tryptophan synthase alpha chain of Bacillus velezensis (strain DSM 23117 / BGSC 10A6 / LMG 26770 / FZB42) (Bacillus amyloliquefaciens subsp. plantarum).